The primary structure comprises 469 residues: RuvB-like helicase 2 (469 aa).

ATP is bound at residue 76-83 (GPPSTGKT).

It belongs to the RuvB family. As to quaternary structure, may form heterododecamers with RVB1. Component of the SWR1 chromatin remodeling complex, the INO80 chromatin remodeling complex, and of the R2TP complex.

It localises to the nucleus. The enzyme catalyses ATP + H2O = ADP + phosphate + H(+). DNA helicase which participates in several chromatin remodeling complexes, including the SWR1 and the INO80 complexes. The SWR1 complex mediates the ATP-dependent exchange of histone H2A for the H2A variant HZT1 leading to transcriptional regulation of selected genes by chromatin remodeling. The INO80 complex remodels chromatin by shifting nucleosomes and is involved in DNA repair. Also involved in pre-rRNA processing. This chain is RuvB-like helicase 2 (rvb2), found in Aspergillus fumigatus (strain ATCC MYA-4609 / CBS 101355 / FGSC A1100 / Af293) (Neosartorya fumigata).